Here is a 299-residue protein sequence, read N- to C-terminus: tRNA dimethylallyltransferase (299 aa).

10 to 17 contacts ATP; that stretch reads GPTAVGKT. 12-17 serves as a coordination point for substrate; the sequence is TAVGKT. Residues 35-38 form an interaction with substrate tRNA region; sequence DSQQ.

Belongs to the IPP transferase family. Monomer. Requires Mg(2+) as cofactor.

The catalysed reaction is adenosine(37) in tRNA + dimethylallyl diphosphate = N(6)-dimethylallyladenosine(37) in tRNA + diphosphate. Its function is as follows. Catalyzes the transfer of a dimethylallyl group onto the adenine at position 37 in tRNAs that read codons beginning with uridine, leading to the formation of N6-(dimethylallyl)adenosine (i(6)A). The sequence is that of tRNA dimethylallyltransferase from Streptococcus thermophilus (strain CNRZ 1066).